We begin with the raw amino-acid sequence, 112 residues long: T cell receptor alpha variable 9-2 (112 aa).

Positions Met-1–Gly-20 are cleaved as a signal peptide. The Ig-like domain maps to Asp-21–Ser-112. The N-linked (GlcNAc...) asparagine glycan is linked to Asn-41. Cys-42 and Cys-109 are joined by a disulfide.

Alpha-beta TR is a heterodimer composed of an alpha and beta chain; disulfide-linked. The alpha-beta TR is associated with the transmembrane signaling CD3 coreceptor proteins to form the TR-CD3 (TcR or TCR). The assembly of alpha-beta TR heterodimers with CD3 occurs in the endoplasmic reticulum where a single alpha-beta TR heterodimer associates with one CD3D-CD3E heterodimer, one CD3G-CD3E heterodimer and one CD247 homodimer forming a stable octameric structure. CD3D-CD3E and CD3G-CD3E heterodimers preferentially associate with TR alpha and TR beta chains, respectively. The association of the CD247 homodimer is the last step of TcR assembly in the endoplasmic reticulum and is required for transport to the cell surface.

Its subcellular location is the cell membrane. V region of the variable domain of T cell receptor (TR) alpha chain that participates in the antigen recognition. Alpha-beta T cell receptors are antigen specific receptors which are essential to the immune response and are present on the cell surface of T lymphocytes. Recognize peptide-major histocompatibility (MH) (pMH) complexes that are displayed by antigen presenting cells (APC), a prerequisite for efficient T cell adaptive immunity against pathogens. Binding of alpha-beta TR to pMH complex initiates TR-CD3 clustering on the cell surface and intracellular activation of LCK that phosphorylates the ITAM motifs of CD3G, CD3D, CD3E and CD247 enabling the recruitment of ZAP70. In turn ZAP70 phosphorylates LAT, which recruits numerous signaling molecules to form the LAT signalosome. The LAT signalosome propagates signal branching to three major signaling pathways, the calcium, the mitogen-activated protein kinase (MAPK) kinase and the nuclear factor NF-kappa-B (NF-kB) pathways, leading to the mobilization of transcription factors that are critical for gene expression and essential for T cell growth and differentiation. The T cell repertoire is generated in the thymus, by V-(D)-J rearrangement. This repertoire is then shaped by intrathymic selection events to generate a peripheral T cell pool of self-MH restricted, non-autoaggressive T cells. Post-thymic interaction of alpha-beta TR with the pMH complexes shapes TR structural and functional avidity. The protein is T cell receptor alpha variable 9-2 of Homo sapiens (Human).